Here is a 329-residue protein sequence, read N- to C-terminus: uncharacterized protein (329 aa).

Helical transmembrane passes span 29 to 49 (IVLWALFVFCAIATAFLAISH), 78 to 98 (VLVAQILTPIFTVLLILCWMG), 120 to 140 (KKWLLWAIFIPQLTLTNSLLV), 164 to 184 (WMIGFFVVWFIQLFLGFLIYL), 217 to 237 (YFFLGLIFAFMDLTIIVLLVI), 260 to 280 (FFWTALAIDVIGLIMTISFIV), and 299 to 319 (GSSLMALITIATLVTTILLFI).

The protein to M.pneumoniae MPN_129.

Its subcellular location is the cell membrane. This is an uncharacterized protein from Mycoplasma pneumoniae (strain ATCC 29342 / M129 / Subtype 1) (Mycoplasmoides pneumoniae).